The chain runs to 269 residues: Histone deacetylase HDT1 (269 aa).

Residues 97–269 are disordered; sequence PFEEEEDDED…HSKAKHSAGK (173 aa). Composition is skewed to acidic residues over residues 98-115 and 153-179; these read FEEEEDDEDDYDESDEDI and KDDEDESSDDDDSDMGEDEDDSDDSEE. Positions 228-238 are enriched in polar residues; it reads PSKQASKTPKS. The C2H2-type zinc finger occupies 242 to 265; it reads HHCKPCNRSFGSEGALDSHSKAKH.

Belongs to the histone deacetylase HD2 family. In terms of tissue distribution, predominantly expressed in ovaries. Accumulates predominantly in the micropylar region of the ovule's integument.

It localises to the nucleus. The protein resides in the nucleolus. Functionally, mediates the deacetylation of lysine residues on the N-terminal part of the core histones (H2A, H2B, H3 and H4). Histone deacetylation gives a tag for epigenetic repression and plays an important role in transcriptional regulation, cell cycle progression and developmental events. The protein is Histone deacetylase HDT1 (HDT1) of Solanum chacoense (Chaco potato).